Reading from the N-terminus, the 906-residue chain is Protein translocase subunit SecA (906 aa).

Residues Gln86, 104-108, and Asp499 contribute to the ATP site; that span reads GEGKT. Residues Cys890, Cys892, Cys901, and His902 each contribute to the Zn(2+) site.

It belongs to the SecA family. As to quaternary structure, monomer and homodimer. Part of the essential Sec protein translocation apparatus which comprises SecA, SecYEG and auxiliary proteins SecDF-YajC and YidC. It depends on Zn(2+) as a cofactor.

The protein resides in the cell inner membrane. It is found in the cytoplasm. The enzyme catalyses ATP + H2O + cellular proteinSide 1 = ADP + phosphate + cellular proteinSide 2.. In terms of biological role, part of the Sec protein translocase complex. Interacts with the SecYEG preprotein conducting channel. Has a central role in coupling the hydrolysis of ATP to the transfer of proteins into and across the cell membrane, serving both as a receptor for the preprotein-SecB complex and as an ATP-driven molecular motor driving the stepwise translocation of polypeptide chains across the membrane. This is Protein translocase subunit SecA from Rickettsia prowazekii (strain Madrid E).